Reading from the N-terminus, the 99-residue chain is Nucleoid-associated protein EbfC (99 aa).

The protein belongs to the YbaB/EbfC family. Homodimer.

The protein localises to the cytoplasm. Its subcellular location is the nucleoid. Binds to DNA and alters its conformation. May be involved in regulation of gene expression, nucleoid organization and DNA protection. The protein is Nucleoid-associated protein EbfC of Borreliella burgdorferi (strain ZS7) (Borrelia burgdorferi).